A 368-amino-acid chain; its full sequence is MEKETSKKYEAAVAAFIKENKPKGTVVYDDLANQLATPYTLDAEAMEKLIQKVEDAGISVVDENGDPSEHSLKKDEKEAEKAQAEDLSAPTGVKINDPVRMYLKEIGRVQLLTAAEEVELALKIEEGDQEAKQRLAEANLRLVVSIAKRYVGRGMQFLDLIQEGNMGLMKAVEKFDYRKGFKFSTYATWWIRQAITRAIADQARTIRIPVHMVETINKLIRIQRQLLQDLGREPTPEEIGAEMDLPTEKVREILKIAQEPVSLETPIGEEDDSHLGDFIEDQDATSPAEHAAYELLKEQLEDVLDTLTDREENVLRLRFGLDDGRTRTLEEVGKVFGVTRERIRQIEAKALRKLRHPSRSKQLKDFLE.

The interval 60 to 86 (VVDENGDPSEHSLKKDEKEAEKAQAED) is disordered. Basic and acidic residues predominate over residues 67–84 (PSEHSLKKDEKEAEKAQA). The tract at residues 135–205 (LAEANLRLVV…TRAIADQART (71 aa)) is sigma-70 factor domain-2. Residues 159 to 162 (DLIQ) carry the Interaction with polymerase core subunit RpoC motif. Residues 214 to 290 (ETINKLIRIQ…DQDATSPAEH (77 aa)) form a sigma-70 factor domain-3 region. Residues 303–356 (VLDTLTDREENVLRLRFGLDDGRTRTLEEVGKVFGVTRERIRQIEAKALRKLRH) are sigma-70 factor domain-4. The segment at residues 329 to 348 (LEEVGKVFGVTRERIRQIEA) is a DNA-binding region (H-T-H motif).

The protein belongs to the sigma-70 factor family. RpoD/SigA subfamily. As to quaternary structure, interacts transiently with the RNA polymerase catalytic core.

The protein localises to the cytoplasm. Its function is as follows. Sigma factors are initiation factors that promote the attachment of RNA polymerase to specific initiation sites and are then released. This sigma factor is the primary sigma factor during exponential growth. The protein is RNA polymerase sigma factor SigA of Enterococcus faecalis (strain ATCC 700802 / V583).